Consider the following 156-residue polypeptide: Transcription antitermination protein NusB (156 aa).

This sequence belongs to the NusB family.

In terms of biological role, involved in transcription antitermination. Required for transcription of ribosomal RNA (rRNA) genes. Binds specifically to the boxA antiterminator sequence of the ribosomal RNA (rrn) operons. The polypeptide is Transcription antitermination protein NusB (Rickettsia felis (strain ATCC VR-1525 / URRWXCal2) (Rickettsia azadi)).